Here is a 350-residue protein sequence, read N- to C-terminus: D-alanine--D-alanine ligase (350 aa).

Residues 138–346 (KSAFSSAGLS…LEQLVHKLIQ (209 aa)) enclose the ATP-grasp domain. ATP is bound at residue 173–228 (ERELNYPCFVKPANLGSSVGISKVRSRQELEAGLEQAAALDPRLVVEQGVNAREVE). Mg(2+)-binding residues include Asp-299, Glu-313, and Asn-315.

It belongs to the D-alanine--D-alanine ligase family. The cofactor is Mg(2+). Mn(2+) serves as cofactor.

It is found in the cytoplasm. It carries out the reaction 2 D-alanine + ATP = D-alanyl-D-alanine + ADP + phosphate + H(+). It participates in cell wall biogenesis; peptidoglycan biosynthesis. Cell wall formation. The chain is D-alanine--D-alanine ligase from Synechococcus sp. (strain CC9605).